The chain runs to 79 residues: Sec-independent protein translocase protein TatA (79 aa).

The helical transmembrane segment at 1–21 (MGGFTSIWHWVIVLLVIVLLF) threads the bilayer. The disordered stretch occupies residues 48 to 79 (EEEAKNEPKTLDAQVTQAKVHESSEIKNKQEG). The segment covering 66 to 79 (KVHESSEIKNKQEG) has biased composition (basic and acidic residues).

It belongs to the TatA/E family. As to quaternary structure, the Tat system comprises two distinct complexes: a TatABC complex, containing multiple copies of TatA, TatB and TatC subunits, and a separate TatA complex, containing only TatA subunits. Substrates initially bind to the TatABC complex, which probably triggers association of the separate TatA complex to form the active translocon.

It is found in the cell inner membrane. Its function is as follows. Part of the twin-arginine translocation (Tat) system that transports large folded proteins containing a characteristic twin-arginine motif in their signal peptide across membranes. TatA could form the protein-conducting channel of the Tat system. The chain is Sec-independent protein translocase protein TatA from Helicobacter acinonychis (strain Sheeba).